The following is a 235-amino-acid chain: MDILPAIDLKDGKAVRLSKGLMDSAKIYSDEPWQVALRFEELGSKWVHIVDLNGAFAGKPANLEQIKKIRENCNLKIELGGGIRDEETIKMYLELGVDRLILGSIAVKDPIFVKKMASKYPIAVGIDAMNGMVAVEGWAEVSTMKATDLAREFANAGVQAIICTDISKDGMLCGVNVEFTESIALASSVDTIASGGVKDIQDIINCKANGNISGVIVGKAFYEGTLDLEEAFKIL.

Residue Asp-8 is the Proton acceptor of the active site. Residue Asp-127 is the Proton donor of the active site.

This sequence belongs to the HisA/HisF family.

It localises to the cytoplasm. The enzyme catalyses 1-(5-phospho-beta-D-ribosyl)-5-[(5-phospho-beta-D-ribosylamino)methylideneamino]imidazole-4-carboxamide = 5-[(5-phospho-1-deoxy-D-ribulos-1-ylimino)methylamino]-1-(5-phospho-beta-D-ribosyl)imidazole-4-carboxamide. The protein operates within amino-acid biosynthesis; L-histidine biosynthesis; L-histidine from 5-phospho-alpha-D-ribose 1-diphosphate: step 4/9. This chain is 1-(5-phosphoribosyl)-5-[(5-phosphoribosylamino)methylideneamino] imidazole-4-carboxamide isomerase, found in Aliarcobacter butzleri (strain RM4018) (Arcobacter butzleri).